We begin with the raw amino-acid sequence, 283 residues long: Pantothenate synthetase (283 aa).

Residue 30–37 (MGNLHAGH) coordinates ATP. Histidine 37 serves as the catalytic Proton donor. Glutamine 61 is a binding site for (R)-pantoate. Glutamine 61 provides a ligand contact to beta-alanine. 149–152 (GQKD) contributes to the ATP binding site. Glutamine 155 provides a ligand contact to (R)-pantoate. Residues valine 178 and 186-189 (LSSR) each bind ATP.

It belongs to the pantothenate synthetase family. As to quaternary structure, homodimer.

The protein resides in the cytoplasm. The enzyme catalyses (R)-pantoate + beta-alanine + ATP = (R)-pantothenate + AMP + diphosphate + H(+). Its pathway is cofactor biosynthesis; (R)-pantothenate biosynthesis; (R)-pantothenate from (R)-pantoate and beta-alanine: step 1/1. Catalyzes the condensation of pantoate with beta-alanine in an ATP-dependent reaction via a pantoyl-adenylate intermediate. The protein is Pantothenate synthetase of Hydrogenovibrio crunogenus (strain DSM 25203 / XCL-2) (Thiomicrospira crunogena).